The chain runs to 290 residues: Elongation factor Ts (290 aa).

An involved in Mg(2+) ion dislocation from EF-Tu region spans residues Thr-80 to Val-83.

The protein belongs to the EF-Ts family.

The protein localises to the cytoplasm. Functionally, associates with the EF-Tu.GDP complex and induces the exchange of GDP to GTP. It remains bound to the aminoacyl-tRNA.EF-Tu.GTP complex up to the GTP hydrolysis stage on the ribosome. This chain is Elongation factor Ts, found in Neorickettsia sennetsu (strain ATCC VR-367 / Miyayama) (Ehrlichia sennetsu).